A 1458-amino-acid chain; its full sequence is ATPase family AAA domain-containing protein 2B (1458 aa).

The tract at residues 1-155 (MVNTRKSSLR…LRGEKKGDGD (155 aa)) is disordered. Ser16 bears the Phosphoserine mark. Residues 23–33 (PGAGAEPGATG) are compositionally biased toward gly residues. Positions 34 to 58 (GSSHFISSRTRSSKTRAASCPAAKA) are enriched in low complexity. 3 positions are modified to phosphoserine: Ser79, Ser81, and Ser86. A compositionally biased stretch (basic and acidic residues) spans 99–115 (VCKDKSKSRSTGQREEW). A compositionally biased stretch (polar residues) spans 116 to 129 (NLSTGQARLTSQPG). Position 140 is a phosphoserine (Ser140). At Thr221 the chain carries Phosphothreonine. Positions 244–286 (NSYGIQNHHEVSTEGEEEESQEEDGDIEVEEAEGEENDRPYNL) are disordered. Residues 256 to 279 (TEGEEEESQEEDGDIEVEEAEGEE) show a composition bias toward acidic residues. Residue Ser318 is modified to Phosphoserine. Positions 321-332 (RRSHIRRKKHAI) are enriched in basic residues. The segment at 321 to 353 (RRSHIRRKKHAIHSSDTTSSDEERFERRKSKSM) is disordered. 441–448 (GPPGTGKT) contributes to the ATP binding site. Ser939 is modified (phosphoserine). The stretch at 943-974 (QLSESEKSRMEDQEENTLRELRLFLRDVTKRL) forms a coiled coil. In terms of domain architecture, Bromo spans 951–1066 (RMEDQEENTL…DTAHAIIAAE (116 aa)). 3 disordered regions span residues 1189–1208 (DCHE…NDES), 1217–1257 (QGQR…EQTS), and 1309–1330 (LLED…DDLE). The segment covering 1240-1252 (NESLLVNSSSSLN) has biased composition (low complexity). 2 positions are modified to phosphoserine: Ser1338 and Ser1347.

Belongs to the AAA ATPase family. Binds acetylated lysine residues in histone H1.4, H2A, H2B, H3 and H4 (in vitro).

It localises to the nucleus. The chain is ATPase family AAA domain-containing protein 2B (ATAD2B) from Homo sapiens (Human).